An 885-amino-acid chain; its full sequence is Leucine--tRNA ligase (885 aa).

A 'HIGH' region motif is present at residues 48 to 58 (PYPSGKLHMGH). The 'KMSKS' region signature appears at 639-643 (TMSKS). An ATP-binding site is contributed by Lys-642.

Belongs to the class-I aminoacyl-tRNA synthetase family.

It is found in the cytoplasm. It catalyses the reaction tRNA(Leu) + L-leucine + ATP = L-leucyl-tRNA(Leu) + AMP + diphosphate. This Bordetella parapertussis (strain 12822 / ATCC BAA-587 / NCTC 13253) protein is Leucine--tRNA ligase.